The following is a 28-amino-acid chain: FLAKKVAKTVAKQAAKQGAKYVVNKQME.

A Glutamic acid 1-amide modification is found at glutamate 28.

In terms of tissue distribution, expressed by the venom gland.

It localises to the secreted. The chain is Short cationic peptide-1a from Cupiennius salei (American wandering spider).